Reading from the N-terminus, the 322-residue chain is Acetyl-coenzyme A carboxylase carboxyl transferase subunit alpha (322 aa).

One can recognise a CoA carboxyltransferase C-terminal domain in the interval 30-293; that stretch reads AVDISAEILR…KKALQDSLKL (264 aa).

The protein belongs to the AccA family. In terms of assembly, acetyl-CoA carboxylase is a heterohexamer composed of biotin carboxyl carrier protein (AccB), biotin carboxylase (AccC) and two subunits each of ACCase subunit alpha (AccA) and ACCase subunit beta (AccD).

It localises to the cytoplasm. The catalysed reaction is N(6)-carboxybiotinyl-L-lysyl-[protein] + acetyl-CoA = N(6)-biotinyl-L-lysyl-[protein] + malonyl-CoA. The protein operates within lipid metabolism; malonyl-CoA biosynthesis; malonyl-CoA from acetyl-CoA: step 1/1. Its function is as follows. Component of the acetyl coenzyme A carboxylase (ACC) complex. First, biotin carboxylase catalyzes the carboxylation of biotin on its carrier protein (BCCP) and then the CO(2) group is transferred by the carboxyltransferase to acetyl-CoA to form malonyl-CoA. The polypeptide is Acetyl-coenzyme A carboxylase carboxyl transferase subunit alpha (Nitrosospira multiformis (strain ATCC 25196 / NCIMB 11849 / C 71)).